Consider the following 83-residue polypeptide: Beta-defensin 19 (83 aa).

A signal peptide spans 1 to 19 (MRLALLLLAILVATELVVS). Cystine bridges form between Cys-27-Cys-54, Cys-34-Cys-48, and Cys-38-Cys-55.

This sequence belongs to the beta-defensin family. As to expression, specifically expressed in male gonads (Sertoli cells).

It localises to the secreted. Functionally, has antibacterial activity. This chain is Beta-defensin 19 (Defb19), found in Mus musculus (Mouse).